The sequence spans 64 residues: NSANPCCDPVTCKPRRGEHCVSGPCCRNCKFLNAGTICRYARGDDMNDYCTGVTSDCPRNPYKS.

The Disintegrin domain occupies 1–64 (NSANPCCDPV…SDCPRNPYKS (64 aa)). Intrachain disulfides connect C6-C29, C20-C26, C25-C50, and C38-C57. A Cell attachment site motif is present at residues 42 to 44 (RGD).

This sequence belongs to the venom metalloproteinase (M12B) family. P-II subfamily. P-IId sub-subfamily. Homodimer; disulfide-linked. As to expression, expressed by the venom gland.

The protein resides in the secreted. In terms of biological role, poor inhibitor of platelet aggregation. The disintegrin inhibits the adhesion of cells expressing the RGD-dependent integrin alpha-5/beta-1 (ITGA5/ITGB1) to immobilized fibronectin. Inhibition on alpha-IIb/beta-3 (ITGA2B/ITGB3) is low, and there is no inhibition on alpha-1/beta-1 (ITGA1/ITGB1), alpha-2/beta-1 (ITGA2/ITGB1) and alpha-6/beta-1 (ITGA6/ITGB1). The chain is Disintegrin VA6 from Vipera ammodytes ammodytes (Western sand viper).